The chain runs to 78 residues: Beta sliding clamp (78 aa).

It belongs to the beta sliding clamp family. In terms of assembly, forms a ring-shaped head-to-tail homodimer around DNA which binds and tethers DNA polymerases and other proteins to the DNA. The DNA replisome complex has a single clamp-loading complex (3 tau and 1 each of delta, delta', psi and chi subunits) which binds 3 Pol III cores (1 core on the leading strand and 2 on the lagging strand) each with a beta sliding clamp dimer. Additional proteins in the replisome are other copies of gamma, psi and chi, Ssb, DNA helicase and RNA primase.

It is found in the cytoplasm. Its function is as follows. Confers DNA tethering and processivity to DNA polymerases and other proteins. Acts as a clamp, forming a ring around DNA (a reaction catalyzed by the clamp-loading complex) which diffuses in an ATP-independent manner freely and bidirectionally along dsDNA. Initially characterized for its ability to contact the catalytic subunit of DNA polymerase III (Pol III), a complex, multichain enzyme responsible for most of the replicative synthesis in bacteria; Pol III exhibits 3'-5' exonuclease proofreading activity. The beta chain is required for initiation of replication as well as for processivity of DNA replication. The sequence is that of Beta sliding clamp (dnaN) from Serratia marcescens.